The chain runs to 428 residues: Histidine--tRNA ligase (428 aa).

Belongs to the class-II aminoacyl-tRNA synthetase family. In terms of assembly, homodimer.

The protein resides in the cytoplasm. The enzyme catalyses tRNA(His) + L-histidine + ATP = L-histidyl-tRNA(His) + AMP + diphosphate + H(+). This is Histidine--tRNA ligase from Thermosynechococcus vestitus (strain NIES-2133 / IAM M-273 / BP-1).